We begin with the raw amino-acid sequence, 366 residues long: Phospho-N-acetylmuramoyl-pentapeptide-transferase (366 aa).

10 helical membrane-spanning segments follow: residues 27–47 (AALFTSALIVFLFGPTIINSL), 71–91 (TPTMGGLMILAGIVGASLLWA), 93–113 (LSNVYVVATLLVTLGFGAIGF), 138–158 (FVIAGIAVYFMMRTALASGIA), 174–194 (FMINIGIMFVVFGGFVIVGAG), 205–225 (GLAIVPVMIAAASFGVIAYLA), 245–265 (LAVVLGAVIGAGLGFLWFNAP), 268–288 (AIFMGDTGSLALGGTIGTVAV), 294–314 (IVMAIIGGLFVIETLSVIIQV), and 343–363 (QVVIRFWIVAVGLAMLGLSTL).

It belongs to the glycosyltransferase 4 family. MraY subfamily. Mg(2+) serves as cofactor.

The protein localises to the cell inner membrane. It carries out the reaction UDP-N-acetyl-alpha-D-muramoyl-L-alanyl-gamma-D-glutamyl-meso-2,6-diaminopimeloyl-D-alanyl-D-alanine + di-trans,octa-cis-undecaprenyl phosphate = di-trans,octa-cis-undecaprenyl diphospho-N-acetyl-alpha-D-muramoyl-L-alanyl-D-glutamyl-meso-2,6-diaminopimeloyl-D-alanyl-D-alanine + UMP. The protein operates within cell wall biogenesis; peptidoglycan biosynthesis. Its function is as follows. Catalyzes the initial step of the lipid cycle reactions in the biosynthesis of the cell wall peptidoglycan: transfers peptidoglycan precursor phospho-MurNAc-pentapeptide from UDP-MurNAc-pentapeptide onto the lipid carrier undecaprenyl phosphate, yielding undecaprenyl-pyrophosphoryl-MurNAc-pentapeptide, known as lipid I. This Rhizobium johnstonii (strain DSM 114642 / LMG 32736 / 3841) (Rhizobium leguminosarum bv. viciae) protein is Phospho-N-acetylmuramoyl-pentapeptide-transferase.